A 504-amino-acid chain; its full sequence is Anaerobic nitric oxide reductase transcription regulator NorR (504 aa).

Residue Asp57 is modified to 4-aspartylphosphate. The 230-residue stretch at 187 to 416 (MIGLSPGMTQ…LEHAIHRAVV (230 aa)) folds into the Sigma-54 factor interaction domain. ATP-binding positions include 215–222 (GETGTGKE) and 278–287 (ADNGTLFLDE). The H-T-H motif DNA-binding region spans 479 to 498 (WAACARMLETDVANLHRLAK).

It functions in the pathway nitrogen metabolism; nitric oxide reduction. Functionally, required for the expression of anaerobic nitric oxide (NO) reductase, acts as a transcriptional activator for at least the norVW operon. Activation also requires sigma-54. In Shigella boydii serotype 4 (strain Sb227), this protein is Anaerobic nitric oxide reductase transcription regulator NorR.